We begin with the raw amino-acid sequence, 167 residues long: Lipoprotein signal peptidase (167 aa).

3 helical membrane-spanning segments follow: residues Leu10–Val30, Trp68–Leu88, and Ser98–Leu118. Catalysis depends on residues Asp124 and Asp142. The helical transmembrane segment at Phe138–Phe158 threads the bilayer.

It belongs to the peptidase A8 family.

It localises to the cell inner membrane. It catalyses the reaction Release of signal peptides from bacterial membrane prolipoproteins. Hydrolyzes -Xaa-Yaa-Zaa-|-(S,diacylglyceryl)Cys-, in which Xaa is hydrophobic (preferably Leu), and Yaa (Ala or Ser) and Zaa (Gly or Ala) have small, neutral side chains.. It functions in the pathway protein modification; lipoprotein biosynthesis (signal peptide cleavage). Its function is as follows. This protein specifically catalyzes the removal of signal peptides from prolipoproteins. The polypeptide is Lipoprotein signal peptidase (Xylella fastidiosa (strain M23)).